The sequence spans 313 residues: MKLTDNVLRSFRVAKVFRENSDKINCFDFSPTGETVISSSDDDSIVLYDCQEGKPKRTLYSKKYGVDLIRYTHAANTVVYSSNKIDDTIRYLSLHDNKYIRYFPGHSKRVVSLSMSPVDDTFISGSLDKTIRLWDLRSPNCQGLMHLQGKPVCSFDPEGLIFAAGINSEMVKLYDLRSFDKGPFATFKMQYDRTCEWTALKFSNDGKLILLSTNGGFLRLVDAFKGAVMHTFGGYNNSKAVTLEASFTPDSQFIMIGSEDGKIHVWNCESGMKVAVLDGKHTGPITCLQFNPKFMTFASACSNMAFWLPTIDD.

WD repeat units follow at residues 19–58 (ENSDKINCFDFSPTGETVISSSDDDSIVLYDCQEGKPKRT), 105–144 (GHSKRVVSLSMSPVDDTFISGSLDKTIRLWDLRSPNCQGL), 146–184 (HLQGKPVCSFDPEGLIFAAGINSEMVKLYDLRSFDKGPF), 192–231 (DRTCEWTALKFSNDGKLILLSTNGGFLRLVDAFKGAVMHT), 236–276 (NNSK…KVAV), and 280–313 (KHTGPITCLQFNPKFMTFASACSNMAFWLPTIDD).

Belongs to the WD repeat SWD2 family. As to quaternary structure, component of the SET1/COMPASS complex. Component of the PNUTS-PP1 phosphatase complex.

Its subcellular location is the nucleus. The protein resides in the chromosome. The protein localises to the cytoplasm. Functionally, regulatory component of the SET1/COMPASS complex implicated in the tethering of this complex to transcriptional start sites of active genes. Facilitates histone H3 'Lys-4' methylation (H3K4me) via recruitment of the SETD1A or SETD1B to the 'Ser-5' phosphorylated C-terminal domain (CTD) of RNA polymerase II large subunit (POLR2A). Component of the PNUTS-PP1 protein phosphatase complex, a protein phosphatase 1 (PP1) complex that promotes RNA polymerase II transcription pause-release, allowing transcription elongation. In Xenopus laevis (African clawed frog), this protein is WD repeat-containing protein 82-B (wdr82-b).